A 180-amino-acid polypeptide reads, in one-letter code: Large ribosomal subunit protein uL6 (180 aa).

The protein belongs to the universal ribosomal protein uL6 family. As to quaternary structure, part of the 50S ribosomal subunit.

In terms of biological role, this protein binds to the 23S rRNA, and is important in its secondary structure. It is located near the subunit interface in the base of the L7/L12 stalk, and near the tRNA binding site of the peptidyltransferase center. The polypeptide is Large ribosomal subunit protein uL6 (Clostridioides difficile (strain 630) (Peptoclostridium difficile)).